The sequence spans 523 residues: Cytochrome P450 monooxygenase ple1 (523 aa).

Residues A9–K29 form a helical membrane-spanning segment. A glycan (N-linked (GlcNAc...) asparagine) is linked at N141. C444 is a heme binding site.

It belongs to the cytochrome P450 family. Heme serves as cofactor.

The protein localises to the membrane. Its pathway is secondary metabolite biosynthesis; terpenoid biosynthesis. In terms of biological role, cytochrome P450 monooxygenase; part of the gene cluster that mediates the biosynthesis of pleuromutilin, a tricyclic diterpene showing antibacterial properties. The geranylgeranyl diphosphate (GGPP) synthase ple4 catalyzes the first step in pleuromutilin biosynthesis. GGPP is then substrate of the premutilin synthase (PS) ple3 to yield premutilin. Premutilin synthase is a bifunctional enzyme composed of the fusion of a class II diterpene cyclase (DTC) and a class I diterpene synthase (DTS), with the corresponding domains and active sites containing characteristic aspartate-rich motifs. GGPP is first converted to mutildienyl-diphosphate (MPP) at the class II DTC site. MPP is subsequently further cyclized at the class I DTS site, followed by a 1,5-hydride shift and addition of water prior to terminating deprotonation, to yield premutilin. The cytochrome P450 monooxygenases ple5 and ple6 hydroxylate premutilin at C-11 and C-3, respectively, producing 11-hydroxypremutilin and 3-hydroxypremutilin. The combination of the actions of both ple5 and ple6 leads to the production of 3,11-dihydroxypremutilin. The short chain dehydrogenase ple7 further converts 3,11-dihydroxypremutilin into mutilin. The acetyltransferase ple2 then acetylates mutilin to produce 14-O-acetylmutilin. Finally, the cytochrome P450 monooxygenase ple1 catalyzes hydroxylation on the alpha position of the acetyl side chain of 14-O-acetylmutilin to yield pleuromutilin. This Rhodocybe pseudopiperita (Clitopilus pseudopiperitus) protein is Cytochrome P450 monooxygenase ple1.